Reading from the N-terminus, the 806-residue chain is Leucine--tRNA ligase (806 aa).

The 'HIGH' region motif lies at 38–48; it reads PYPSGEIHMGH. The 'KMSKS' region signature appears at 572–576; the sequence is KMSKS. K575 contacts ATP.

It belongs to the class-I aminoacyl-tRNA synthetase family.

It localises to the cytoplasm. The catalysed reaction is tRNA(Leu) + L-leucine + ATP = L-leucyl-tRNA(Leu) + AMP + diphosphate. In Helicobacter pylori (strain J99 / ATCC 700824) (Campylobacter pylori J99), this protein is Leucine--tRNA ligase.